The following is a 257-amino-acid chain: tRNA pseudouridine synthase A (257 aa).

The active-site Nucleophile is Asp53. Tyr111 contacts substrate.

Belongs to the tRNA pseudouridine synthase TruA family. As to quaternary structure, homodimer.

The catalysed reaction is uridine(38/39/40) in tRNA = pseudouridine(38/39/40) in tRNA. In terms of biological role, formation of pseudouridine at positions 38, 39 and 40 in the anticodon stem and loop of transfer RNAs. This is tRNA pseudouridine synthase A from Xanthomonas campestris pv. campestris (strain 8004).